Here is a 65-residue protein sequence, read N- to C-terminus: Large ribosomal subunit protein uL30 (65 aa).

This sequence belongs to the universal ribosomal protein uL30 family. In terms of assembly, part of the 50S ribosomal subunit.

In Onion yellows phytoplasma (strain OY-M), this protein is Large ribosomal subunit protein uL30.